Reading from the N-terminus, the 424-residue chain is L-glutamine:scyllo-inosose aminotransferase (424 aa).

The disordered stretch occupies residues 1–21 (MDSSLAISGGPRLSNREWPRW). Lys202 carries the N6-(pyridoxal phosphate)lysine modification.

The protein belongs to the DegT/DnrJ/EryC1 family. L-glutamine:2-deoxy-scyllo-inosose/scyllo-inosose aminotransferase subfamily. As to quaternary structure, homodimer. Pyridoxal 5'-phosphate is required as a cofactor.

The catalysed reaction is scyllo-inosose + L-glutamine = 1-amino-1-deoxy-scyllo-inositol + 2-oxoglutaramate. It participates in antibiotic biosynthesis; streptomycin biosynthesis. Catalyzes the PLP-dependent transamination of scyllo-inosose to form scyllo-inosamine. The polypeptide is L-glutamine:scyllo-inosose aminotransferase (stsC) (Streptomyces griseus).